Consider the following 162-residue polypeptide: Nucleotide-binding protein Franean1_6074 (162 aa).

Belongs to the YajQ family.

Functionally, nucleotide-binding protein. The protein is Nucleotide-binding protein Franean1_6074 of Parafrankia sp. (strain EAN1pec).